Reading from the N-terminus, the 602-residue chain is Alpha-glucosides permease MPH3 (602 aa).

The Cytoplasmic segment spans residues 1–106 (MKNLSFLINR…AAAWSLLVST (106 aa)). The helical transmembrane segment at 107–127 (TLIMEGYDTAILGAFYALPIF) threads the bilayer. The Extracellular portion of the chain corresponds to 128-142 (QRKFGSQNDKTGEWE). Residues 143-163 (ISASWQIGLTLCYMAGEIVGL) traverse the membrane as a helical segment. The Cytoplasmic portion of the chain corresponds to 164–178 (QLTGPSVDLVGNRYT). A helical membrane pass occupies residues 179 to 199 (LIIALFFLAAFTFILYFCNSL). G200 is a topological domain (extracellular). The chain crosses the membrane as a helical span at residues 201–221 (MIAVGQALCGMPWGCFQCLTV). Residues 222–234 (SYASEICPLALRY) are Cytoplasmic-facing. The helical transmembrane segment at 235 to 255 (YLTTYSNLCWLFGQLFAAGIM) threads the bilayer. The Extracellular segment spans residues 256 to 270 (KNSQKKYADSELGYK). Residues 271-291 (LPFALQWILPVPLALGIFFAP) form a helical membrane-spanning segment. The Cytoplasmic portion of the chain corresponds to 292-363 (ESPWWLVKKG…EDKINRRRTR (72 aa)). A helical membrane pass occupies residues 364-384 (ITCLCWAGQATCGSILIGYST). At 385–397 (YFYEKAGVSTEMS) the chain is on the extracellular side. Residues 398–418 (FTFSIIQYCLGICATFLSWWA) traverse the membrane as a helical segment. Over 419–426 (SKYFGRYD) the chain is Cytoplasmic. The chain crosses the membrane as a helical span at residues 427 to 447 (LYAFGLAFQTIVFFIIGGLGC). At 448-459 (SSTHGSKMGSGS) the chain is on the extracellular side. A helical membrane pass occupies residues 460–480 (LLMAVAFFYNLGIAPVVFCLV). Topologically, residues 481 to 492 (SEMPSSRLRTKT) are cytoplasmic. The helical transmembrane segment at 493 to 513 (IILARNTYNVVSIICSVLILY) threads the bilayer. The Extracellular segment spans residues 514–525 (QLNSKKWNWGAK). A helical transmembrane segment spans residues 526 to 546 (SGFFWGVLCFCTLIWAVVDLP). Residues 547-602 (ETAGKTFVEINELFKLGVSARKFKSTKVDPFVVKTPPKDVSHNDPKGDIEASIAEE) are Cytoplasmic-facing. The span at 582–595 (PPKDVSHNDPKGDI) shows a compositional bias: basic and acidic residues. The segment at 582-602 (PPKDVSHNDPKGDIEASIAEE) is disordered.

This sequence belongs to the major facilitator superfamily. Sugar transporter (TC 2.A.1.1) family.

The protein localises to the cell membrane. Functionally, high-affinity uptake of maltose and maltotriose. Also transports alpha-methylglucoside, glucose and turanose but not melezitose or trehalose. The chain is Alpha-glucosides permease MPH3 (MPH3) from Saccharomyces cerevisiae (strain ATCC 204508 / S288c) (Baker's yeast).